A 176-amino-acid polypeptide reads, in one-letter code: Mediator of RNA polymerase II transcription subunit 11 (176 aa).

The segment at 98–176 (SRVRELEETK…MGGDSSMSTN (79 aa)) is disordered. The segment covering 99-108 (RVRELEETKA) has biased composition (basic and acidic residues). The span at 124-154 (HAAAQQQQQQQQQQQQQQQQMQQAAQQQQQQ) shows a compositional bias: low complexity.

It belongs to the Mediator complex subunit 11 family. In terms of assembly, component of the Mediator complex, which may include CDK8, MED4, MED6, MED11, MED14, MED17, MED18, MED20, MED21, MED22, MED27, MED28, MED30 and MED31.

It is found in the nucleus. In terms of biological role, component of the Mediator complex, a coactivator involved in the regulated transcription of nearly all RNA polymerase II-dependent genes. Mediator functions as a bridge to convey information from gene-specific regulatory proteins to the basal RNA polymerase II transcription machinery. Mediator is recruited to promoters by direct interactions with regulatory proteins and serves as a scaffold for the assembly of a functional pre-initiation complex with RNA polymerase II and the general transcription factors. The sequence is that of Mediator of RNA polymerase II transcription subunit 11 (MED11) from Drosophila melanogaster (Fruit fly).